The following is a 432-amino-acid chain: MAKNVVVIGAQWGDEGKGKIVDWLAEEAGGVVRFQGGHNAGHTLVVGGKKTILRLIPSGILHEGLDCFIGSGVVVSPEALLGEIDELNAAGVKNVEGRLKIAPTCPLILPYHIALDQAREASRGKGKIGTTGRGIGPAYEDKVARRAIRAADLLHPEKLREKLDAVLAYYNVQLQYLHNAGPVKAEDVMAVIEKVAPRIAPMIADVSRVLNEKNKNGEKLLFEGAQGALLDIDYGTYPFVTSSNCLAGAASAGAGVGPQMLDYVLGIVKAYTTRVGSGPFPTELFDEVGAGLAERGHEFGSVTGRARRCGWFDAAALKRSIQINGISGMCITKLDVMDGVETINICVGYELPGGGKTDILPCGSDAVETCKPIYETMPGWRESTVGVKSYDALPANAKAYLKRIEEVCGAPVAIVSTGPDREETIVLHHPFA.

GTP is bound by residues 13-19 and 41-43; these read GDEGKGK and GHT. The Proton acceptor role is filled by aspartate 14. Positions 14 and 41 each coordinate Mg(2+). IMP is bound by residues 14 to 17, 39 to 42, threonine 131, arginine 145, glutamine 226, threonine 241, and arginine 305; these read DEGK and NAGH. The active-site Proton donor is histidine 42. 301 to 307 is a substrate binding site; it reads SVTGRAR. Residues arginine 307, 333-335, and 416-418 each bind GTP; these read KLD and STG.

The protein belongs to the adenylosuccinate synthetase family. In terms of assembly, homodimer. Mg(2+) is required as a cofactor.

The protein resides in the cytoplasm. The catalysed reaction is IMP + L-aspartate + GTP = N(6)-(1,2-dicarboxyethyl)-AMP + GDP + phosphate + 2 H(+). It functions in the pathway purine metabolism; AMP biosynthesis via de novo pathway; AMP from IMP: step 1/2. Its function is as follows. Plays an important role in the de novo pathway of purine nucleotide biosynthesis. Catalyzes the first committed step in the biosynthesis of AMP from IMP. The chain is Adenylosuccinate synthetase from Neisseria gonorrhoeae (strain ATCC 700825 / FA 1090).